A 458-amino-acid polypeptide reads, in one-letter code: Bone morphogenetic protein 3 (458 aa).

The N-terminal stretch at 1-23 (MAECRPWLVLWVGCCGCLCLALG) is a signal peptide. Positions 24–348 (ELLNDGLLAV…EQTLKKARRK (325 aa)) are excised as a propeptide. N-linked (GlcNAc...) asparagine glycosylation is present at Asn-107. Disordered regions lie at residues 244-275 (DSVV…KKRS) and 303-335 (ERKP…SQTL). The span at 320-329 (NKKKLRKGSR) shows a compositional bias: basic residues. 3 disulfides stabilise this stretch: Cys-356/Cys-423, Cys-385/Cys-455, and Cys-389/Cys-457. Residue Asn-449 is glycosylated (N-linked (GlcNAc...) asparagine).

This sequence belongs to the TGF-beta family. In terms of assembly, homodimer. Can form heterodimers with ADMP, BMP-2-I and/or BMP-2-II, and DERRIERE.

It is found in the secreted. In terms of biological role, dorsalizing factor. Antagonizes mesoderm formation by ventralizing BMPs. The protein is Bone morphogenetic protein 3 (bmp3) of Xenopus laevis (African clawed frog).